The sequence spans 389 residues: Inactive serine/threonine-protein kinase ZRK12 (389 aa).

Residues 41-342 enclose the Protein kinase domain; the sequence is SADEIRKATN…ETQFDSHQDI (302 aa). ATP is bound by residues 47–55 and lysine 84; that span reads KATNNFGVS. Position 129 is a phosphotyrosine (tyrosine 129). Position 214 is a phosphothreonine (threonine 214). The residue at position 222 (tyrosine 222) is a Phosphotyrosine.

It belongs to the protein kinase superfamily. Ser/Thr protein kinase family.

Functionally, together with RPP13L4/ZAR1, involved in the regulation of the ambient temperature-sensitive intersection of growth and immune response in the absence of pathogens. This chain is Inactive serine/threonine-protein kinase ZRK12, found in Arabidopsis thaliana (Mouse-ear cress).